The following is a 352-amino-acid chain: MESGSRPSLGQVILLGTSSMVTAVLYSIYRQKAQVAQELKGAKKIHLGEDLKGILSEAPGKCVPYAVIEGAVRSVKETLNSQFVENCKGVIQRLSLQEHKMVWNRTTHLWNDYSKIIHQRTNTVPFDLVPHEDGVAVSVRVLKPLDSVDLGLETVYEKFHPSVQSFTDAIGHYISGERPKGIQETEEMLKVGATLTGIGELVLDNNAVRLQPPKQGMQYYLSSQDFDSLLHRQESSVRLWKILVLVFGFATCATLFFILRKQYLHRQERLRQQQLQEEFLEHEAQLLSQASPEDRESLKSACVVCLSNFKSCVFLECGHVCSCRQCYLALPEPKRCPICRREITRVIPLYNS.

The Cytoplasmic portion of the chain corresponds to 1–8 (MESGSRPS). A helical membrane pass occupies residues 9–29 (LGQVILLGTSSMVTAVLYSIY). The Mitochondrial intermembrane segment spans residues 30-238 (RQKAQVAQEL…LLHRQESSVR (209 aa)). Lysine 52 participates in a covalent cross-link: Glycyl lysine isopeptide (Lys-Gly) (interchain with G-Cter in ubiquitin). Residues 239 to 259 (LWKILVLVFGFATCATLFFIL) form a helical membrane-spanning segment. Residues 260–352 (RKQYLHRQER…ITRVIPLYNS (93 aa)) lie on the Cytoplasmic side of the membrane. Lysine 299 participates in a covalent cross-link: Glycyl lysine isopeptide (Lys-Gly) (interchain with G-Cter in ubiquitin). The RING-type zinc finger occupies 302 to 340 (CVVCLSNFKSCVFLECGHVCSCRQCYLALPEPKRCPICR).

Homooligomer. Interacts with MAP3K7/TAK1. Interacts with UBC9. Interacts with and sumoylates DNM1L. Interacts with MAVS. Interacts with TP53 (via N-terminus); the interaction leads to ubiquitination and proteasomal degradation of TP53. Post-translationally, ubiquitinated by PRKN during mitophagy, leading to its degradation and enhancement of mitophagy. Deubiquitinated by USP30. As to expression, expressed in cortical neurons (at protein level).

It localises to the mitochondrion outer membrane. The protein resides in the peroxisome. The enzyme catalyses S-ubiquitinyl-[E2 ubiquitin-conjugating enzyme]-L-cysteine + [acceptor protein]-L-lysine = [E2 ubiquitin-conjugating enzyme]-L-cysteine + N(6)-ubiquitinyl-[acceptor protein]-L-lysine.. It participates in protein modification; protein ubiquitination. Its pathway is protein modification; protein sumoylation. Functionally, exhibits weak E3 ubiquitin-protein ligase activity. E3 ubiquitin ligases accept ubiquitin from an E2 ubiquitin-conjugating enzyme in the form of a thioester and then directly transfer the ubiquitin to targeted substrates. Can ubiquitinate AKT1 preferentially at 'Lys-284' involving 'Lys-48'-linked polyubiquitination and seems to be involved in regulation of Akt signaling by targeting phosphorylated Akt to proteasomal degradation. Mediates polyubiquitination of cytoplasmic TP53 at 'Lys-27' which targets TP53 for proteasomal degradation, thus reducing TP53 levels in the cytoplasm and mitochondrion. Proposed to preferentially act as a SUMO E3 ligase at physiological concentrations. Plays a role in the control of mitochondrial morphology by promoting mitochondrial fragmentation, and influences mitochondrial localization. Likely to promote mitochondrial fission through negatively regulating the mitochondrial fusion proteins MFN1 and MFN2, acting in a pathway that is parallel to the PRKN/PINK1 regulatory pathway. May also be involved in the sumoylation of the membrane fission protein DNM1L. Inhibits cell growth. When overexpressed, activates JNK through MAP3K7/TAK1 and induces caspase-dependent apoptosis. Involved in the modulation of innate immune defense against viruses by inhibiting RIGI-dependent antiviral response. Can mediate RIGI sumoylation and disrupt its polyubiquitination. The polypeptide is Mitochondrial ubiquitin ligase activator of NFKB 1 (Mul1) (Mus musculus (Mouse)).